We begin with the raw amino-acid sequence, 288 residues long: Phosphatidylserine decarboxylase proenzyme (288 aa).

Catalysis depends on charge relay system; for autoendoproteolytic cleavage activity residues Asp95, His152, and Ser255. Ser255 acts as the Schiff-base intermediate with substrate; via pyruvic acid; for decarboxylase activity in catalysis. A Pyruvic acid (Ser); by autocatalysis modification is found at Ser255.

The protein belongs to the phosphatidylserine decarboxylase family. PSD-B subfamily. Prokaryotic type I sub-subfamily. In terms of assembly, heterodimer of a large membrane-associated beta subunit and a small pyruvoyl-containing alpha subunit. The cofactor is pyruvate. Is synthesized initially as an inactive proenzyme. Formation of the active enzyme involves a self-maturation process in which the active site pyruvoyl group is generated from an internal serine residue via an autocatalytic post-translational modification. Two non-identical subunits are generated from the proenzyme in this reaction, and the pyruvate is formed at the N-terminus of the alpha chain, which is derived from the carboxyl end of the proenzyme. The autoendoproteolytic cleavage occurs by a canonical serine protease mechanism, in which the side chain hydroxyl group of the serine supplies its oxygen atom to form the C-terminus of the beta chain, while the remainder of the serine residue undergoes an oxidative deamination to produce ammonia and the pyruvoyl prosthetic group on the alpha chain. During this reaction, the Ser that is part of the protease active site of the proenzyme becomes the pyruvoyl prosthetic group, which constitutes an essential element of the active site of the mature decarboxylase.

It localises to the cell membrane. The catalysed reaction is a 1,2-diacyl-sn-glycero-3-phospho-L-serine + H(+) = a 1,2-diacyl-sn-glycero-3-phosphoethanolamine + CO2. It functions in the pathway phospholipid metabolism; phosphatidylethanolamine biosynthesis; phosphatidylethanolamine from CDP-diacylglycerol: step 2/2. Catalyzes the formation of phosphatidylethanolamine (PtdEtn) from phosphatidylserine (PtdSer). This chain is Phosphatidylserine decarboxylase proenzyme, found in Methylococcus capsulatus (strain ATCC 33009 / NCIMB 11132 / Bath).